We begin with the raw amino-acid sequence, 158 residues long: C-type lectin BfL-1 (158 aa).

The first 21 residues, 1 to 21, serve as a signal peptide directing secretion; the sequence is MGHFTFIGLCLLAMFLSLSGA. Intrachain disulfides connect C26–C37, C54–C154, C61–C156, and C129–C146. The C-type lectin domain occupies 33–155; it reads KNGLCYKVFS…CAALRPFLCQ (123 aa). 3 residues coordinate Ca(2+): Q119, D121, and E127. The Galactose-binding motif lies at 119 to 121; that stretch reads QPD. N134 carries an N-linked (GlcNAc...) asparagine glycan. Ca(2+)-binding residues include N142 and D143.

The protein belongs to the true venom lectin family. As to quaternary structure, homodimer; non-covalently linked. As to expression, expressed by the venom gland.

The protein resides in the secreted. Functionally, galactose-binding lectin which recognizes specific carbohydrate structures and agglutinates a variety of animal cells by binding to cell-surface glycoproteins and glycolipids. May be a calcium-dependent lectin. The chain is C-type lectin BfL-1 from Bungarus fasciatus (Banded krait).